The chain runs to 118 residues: Large ribosomal subunit protein bL20 (118 aa).

It belongs to the bacterial ribosomal protein bL20 family.

Binds directly to 23S ribosomal RNA and is necessary for the in vitro assembly process of the 50S ribosomal subunit. It is not involved in the protein synthesizing functions of that subunit. This is Large ribosomal subunit protein bL20 from Rhodopirellula baltica (strain DSM 10527 / NCIMB 13988 / SH1).